We begin with the raw amino-acid sequence, 376 residues long: Carbamoyl phosphate synthase small chain (376 aa).

The CPSase stretch occupies residues Met-1–Glu-184. Ser-45, Gly-236, and Gly-238 together coordinate L-glutamine. The 187-residue stretch at Lys-188–Ser-374 folds into the Glutamine amidotransferase type-1 domain. Cys-263 serves as the catalytic Nucleophile. The L-glutamine site is built by Leu-264, Gln-267, Asn-305, Gly-307, and Phe-308. Active-site residues include His-347 and Glu-349.

This sequence belongs to the CarA family. As to quaternary structure, composed of two chains; the small (or glutamine) chain promotes the hydrolysis of glutamine to ammonia, which is used by the large (or ammonia) chain to synthesize carbamoyl phosphate. Tetramer of heterodimers (alpha,beta)4.

The catalysed reaction is hydrogencarbonate + L-glutamine + 2 ATP + H2O = carbamoyl phosphate + L-glutamate + 2 ADP + phosphate + 2 H(+). The enzyme catalyses L-glutamine + H2O = L-glutamate + NH4(+). Its pathway is amino-acid biosynthesis; L-arginine biosynthesis; carbamoyl phosphate from bicarbonate: step 1/1. It functions in the pathway pyrimidine metabolism; UMP biosynthesis via de novo pathway; (S)-dihydroorotate from bicarbonate: step 1/3. Functionally, small subunit of the glutamine-dependent carbamoyl phosphate synthetase (CPSase). CPSase catalyzes the formation of carbamoyl phosphate from the ammonia moiety of glutamine, carbonate, and phosphate donated by ATP, constituting the first step of 2 biosynthetic pathways, one leading to arginine and/or urea and the other to pyrimidine nucleotides. The small subunit (glutamine amidotransferase) binds and cleaves glutamine to supply the large subunit with the substrate ammonia. The sequence is that of Carbamoyl phosphate synthase small chain from Syntrophotalea carbinolica (strain DSM 2380 / NBRC 103641 / GraBd1) (Pelobacter carbinolicus).